Here is a 332-residue protein sequence, read N- to C-terminus: MMKTVLLLVVLVGVAYCDDDGWDMGNFFQQYHQWQQQISSSSSSSSSSGGGGSSGGGASGGGGGGGSSGGGGASGGGGGGSSGGGGLTKVVLKAGGGGRGGGGIVKSVGGGGGGVTKLVAAGGASGGGSVSGGGGGGLALLAGGSAAGGGRSGVVTVSKQPIIINRQVTHVNTGGSGGGVGGGFGGGRGGFGYGLYGGHHHYNPCGYGQVYSYYYGCQSIYKQPARQVYHQPIYQPVQTVYQPVQYYQQPYQYQHSYGQASHAYQPQTTKYISYSYPQYSSQGSYPIVAGGSAGGFASARSGGFGLSSGGIGGHSSYPLSVFKHAKGEKYKL.

Residues 1-17 (MMKTVLLLVVLVGVAYC) form the signal peptide. The disordered stretch occupies residues 39–81 (SSSSSSSSSSGGGGSSGGGASGGGGGGGSSGGGGASGGGGGGS). The segment covering 48–81 (SGGGGSSGGGASGGGGGGGSSGGGGASGGGGGGS) has biased composition (gly residues).

Prismatic layer of shell (at protein level). Expressed primarily in the mantle with highest level in the mantle edge and lower level in the mantle pallium.

It is found in the secreted. This Margaritifera margaritifera (Freshwater pearl mussel) protein is Serine, glycine, tyrosine and glutamine-rich protein.